A 312-amino-acid polypeptide reads, in one-letter code: Malate dehydrogenase (312 aa).

Residues 12-17 (GAGFTG) and D36 contribute to the NAD(+) site. Positions 87 and 93 each coordinate substrate. Residues N100 and 123–125 (LTN) contribute to the NAD(+) site. N125 lines the substrate pocket. The residue at position 149 (S149) is a Phosphoserine. Residue R156 participates in substrate binding. The active-site Proton acceptor is the H180.

This sequence belongs to the LDH/MDH superfamily. MDH type 3 family.

It catalyses the reaction (S)-malate + NAD(+) = oxaloacetate + NADH + H(+). Functionally, catalyzes the reversible oxidation of malate to oxaloacetate. The polypeptide is Malate dehydrogenase (Anoxybacillus flavithermus (strain DSM 21510 / WK1)).